A 496-amino-acid chain; its full sequence is L-carnitine dehydrogenase/betainyl-CoA thioesterase (496 aa).

The tract at residues 1–335 (MTTITKAACI…KRLWEKGGSP (335 aa)) is L-carnitine dehydrogenase. Residue 11–16 (GGGVIG) participates in NAD(+) binding. Residues 336–496 (SKSLDASGPL…GAGRHVGQKR (161 aa)) are betainyl-CoA thioesterase.

It in the N-terminal section; belongs to the 3-hydroxyacyl-CoA dehydrogenase family. L-carnitine dehydrogenase subfamily. The protein in the C-terminal section; belongs to the betainyl-CoA thioesterase family. Homodimer.

It localises to the cytoplasm. It carries out the reaction carnitine + NAD(+) = 3-dehydrocarnitine + NADH + H(+). It catalyses the reaction N,N,N-trimethylglycyl-CoA + H2O = glycine betaine + CoA + H(+). It functions in the pathway amine and polyamine metabolism; carnitine metabolism. Functionally, multifunctional enzyme that catalyzes the NAD(+)-dependent oxidation of L-carnitine to 3-dehydrocarnitine and the cleavage of betainyl-CoA (N,N,N-trimethylglycyl-CoA) into glycine betaine and coenzyme A. Can also hydrolyze L-carnitinyl-CoA, but with much lower efficiency. Is involved in a L-carnitine degradation pathway that allows R.meliloti to grow on L-carnitine as the sole source of carbon and nitrogen. This is L-carnitine dehydrogenase/betainyl-CoA thioesterase from Rhizobium meliloti (strain 1021) (Ensifer meliloti).